An 802-amino-acid chain; its full sequence is Pyrophosphate-energized membrane proton pump 2 (802 aa).

The next 6 membrane-spanning stretches (helical) occupy residues 45–65, 66–86, 118–138, 160–180, 206–226, and 246–266; these read VLSI…ASTS, PIIV…IYLT, YSTI…IYLF, VAAF…GMWV, AGGF…AILY, and LPLL…FAQL. K273 is a binding site for substrate. 3 residues coordinate Mg(2+): D276, D280, and D306. 5 helical membrane-spanning segments follow: residues 348 to 368, 386 to 406, 421 to 441, 468 to 488, and 511 to 531; these read FILF…IGIL, MAVL…TFGA, WFNF…FVWI, IIAG…TISV, and GGLF…AYVL. 2 residues coordinate Mg(2+): D541 and N568. Transmembrane regions (helical) follow at residues 577–597, 615–635, 686–706, and 716–736; these read FAIG…MDEV, VFVG…WACA, GALA…LGYY, and VVAS…LFLN. Mg(2+)-binding residues include D743 and D773. K776 is a binding site for substrate. A helical membrane pass occupies residues 782–802; that stretch reads SIHVLIKMLATITLVMAPVFL.

Belongs to the H(+)-translocating pyrophosphatase (TC 3.A.10) family. K(+)-insensitive subfamily. In terms of assembly, monomer. As to expression, ubiquitous. Mostly expressed in cotyledons, roots and flowers. Especially high levels in trichomes, sepals and stamen filaments.

The protein localises to the golgi apparatus membrane. The catalysed reaction is diphosphate + H2O + H(+)(in) = 2 phosphate + 2 H(+)(out). Its activity is regulated as follows. Activated by Mg(+) but not by K(+). Inhibited by Ca(2+). Pyrophosphatase active in both inorganic pyrophosphate hydrolysis and H(+) translocation. In Arabidopsis thaliana (Mouse-ear cress), this protein is Pyrophosphate-energized membrane proton pump 2 (AVPL1).